Consider the following 339-residue polypeptide: DNA-directed RNA polymerase subunit alpha (339 aa).

Residues 1–233 (MVREEVAGST…DLFLPFLHAE (233 aa)) form an alpha N-terminal domain (alpha-NTD) region. The interval 264 to 339 (KKGIPLNCIF…IDLLKNKLSF (76 aa)) is alpha C-terminal domain (alpha-CTD).

Belongs to the RNA polymerase alpha chain family. In terms of assembly, in plastids the minimal PEP RNA polymerase catalytic core is composed of four subunits: alpha, beta, beta', and beta''. When a (nuclear-encoded) sigma factor is associated with the core the holoenzyme is formed, which can initiate transcription.

The protein resides in the plastid. Its subcellular location is the chloroplast. The catalysed reaction is RNA(n) + a ribonucleoside 5'-triphosphate = RNA(n+1) + diphosphate. DNA-dependent RNA polymerase catalyzes the transcription of DNA into RNA using the four ribonucleoside triphosphates as substrates. In Festucopsis serpentini, this protein is DNA-directed RNA polymerase subunit alpha.